We begin with the raw amino-acid sequence, 603 residues long: Insulin-like growth factor-binding protein complex acid labile subunit (603 aa).

An N-terminal signal peptide occupies residues 1–23 (MALRTGGPALVVLLAFWVALGPC). The LRRNT domain maps to 32–74 (ASADAEGPQCPVACTCSHDDYTDELSVFCSSKNLTHLPDDIPV). 2 disulfide bridges follow: Cys-41-Cys-47 and Cys-45-Cys-60. Residues Asn-64, Asn-85, and Asn-96 are each glycosylated (N-linked (GlcNAc...) asparagine). 19 LRR repeats span residues 75-96 (STRALWLDGNNLSSIPSAAFQN), 99-120 (SLDFLNLQGSWLRSLEPQALLG), 123-144 (NLYYLHLERNRLRNLAVGLFTH), 147-168 (SLASLSLSSNLLGRLEEGLFQG), 171-192 (HLWDLNLGWNSLVVLPDTVFQG), 195-216 (NLHELVLAGNKLTYLQPALFCG), 219-240 (ELRELDLSRNALRSVKANVFVH), 243-264 (RLQKLYLDRNLITAVAPGAFLG), 267-288 (ALRWLDLSHNRVAGLMEDTFPG), 291-312 (GLHVLRLAHNAIASLRPRTFKD), 315-336 (FLEELQLGHNRIRQLGERTFEG), 339-360 (QLEVLTLNDNQITEVRVGAFSG), 363-384 (NVAVMNLSGNCLRSLPERVFQG), 387-408 (KLHSLHLEHSCLGHVRLHTFAG), 411-432 (GLRRLFLRDNSISSIEEQSLAG), 435-456 (ELLELDLTTNRLTHLPRQLFQG), 459-480 (HLEYLLLSYNQLTTLSAEVLGP), 483-504 (RAFWLDISHNHLETLAEGLFSS), and 507-528 (RVRYLSLRNNSLQTFSPQPGLE). N-linked (GlcNAc...) asparagine glycosylation is present at Asn-368. Asn-515 is a glycosylation site (N-linked (GlcNAc...) asparagine). The region spanning 535 to 603 (NPWDCSCPLK…DVSETHFVHC (69 aa)) is the LRRCT domain. 3 disulfides stabilise this stretch: Cys-539–Cys-581, Cys-541–Cys-603, and Cys-565–Cys-570. N-linked (GlcNAc...) asparagine glycans are attached at residues Asn-578 and Asn-586.

As to quaternary structure, forms a ternary complex with IGF1 and IGFBP3. In terms of tissue distribution, brain, kidney, lung, heart, spleen, muscle and liver.

The protein resides in the secreted. It is found in the extracellular space. May have an important role in regulating the access of circulating IGFs to the tissues. The protein is Insulin-like growth factor-binding protein complex acid labile subunit (Igfals) of Rattus norvegicus (Rat).